Here is a 298-residue protein sequence, read N- to C-terminus: HTH-type transcriptional regulator ArgP (298 aa).

The region spanning 4–60 is the HTH lysR-type domain; it reads LDYKWIEALDAVVYQGSFERAAEHLFVSQSAISQRIKQLEKFLAQPVLIREQPPKPT. Residues 21–40 constitute a DNA-binding region (H-T-H motif); sequence FERAAEHLFVSQSAISQRIK.

The protein belongs to the LysR transcriptional regulatory family. As to quaternary structure, homodimer.

Controls the transcription of genes involved in arginine and lysine metabolism. The sequence is that of HTH-type transcriptional regulator ArgP from Vibrio parahaemolyticus serotype O3:K6 (strain RIMD 2210633).